The following is a 286-amino-acid chain: NAD kinase (286 aa).

Aspartate 74 acts as the Proton acceptor in catalysis. NAD(+) is bound by residues 74-75, 148-149, aspartate 178, alanine 186, 189-194, and glutamine 244; these read DG, ND, and TAYNLS.

It belongs to the NAD kinase family. It depends on a divalent metal cation as a cofactor.

The protein localises to the cytoplasm. It carries out the reaction NAD(+) + ATP = ADP + NADP(+) + H(+). Involved in the regulation of the intracellular balance of NAD and NADP, and is a key enzyme in the biosynthesis of NADP. Catalyzes specifically the phosphorylation on 2'-hydroxyl of the adenosine moiety of NAD to yield NADP. In Campylobacter jejuni subsp. doylei (strain ATCC BAA-1458 / RM4099 / 269.97), this protein is NAD kinase.